We begin with the raw amino-acid sequence, 892 residues long: Translation initiation factor IF-2 (892 aa).

A compositionally biased stretch (basic and acidic residues) spans 165–175 (EEQAELERQKT). Disordered stretches follow at residues 165-250 (EEQA…EDDS) and 264-300 (ERAR…AHGF). Positions 208–222 (PRAVRPAPAARPSVS) are enriched in low complexity. Residues 391-560 (PRPPVVTIMG…SIQAEVLELK (170 aa)) form the tr-type G domain. GTP contacts are provided by residues 400-407 (GHVDHGKT), 446-450 (DTPGH), and 500-503 (SKID).

It belongs to the TRAFAC class translation factor GTPase superfamily. Classic translation factor GTPase family. IF-2 subfamily.

It is found in the cytoplasm. One of the essential components for the initiation of protein synthesis. Protects formylmethionyl-tRNA from spontaneous hydrolysis and promotes its binding to the 30S ribosomal subunits. Also involved in the hydrolysis of GTP during the formation of the 70S ribosomal complex. In Xylella fastidiosa (strain 9a5c), this protein is Translation initiation factor IF-2.